We begin with the raw amino-acid sequence, 1997 residues long: Chromatin-remodeling ATPase INO80 (1997 aa).

Disordered stretches follow at residues 1-378, 397-579, and 674-858; these read MDHF…AAPS, IAAP…AENE, and ERKK…EKVV. Over residues 12–25 the composition is skewed to basic and acidic residues; that stretch reads PHFDEDGTEGRGDR. The span at 32-41 shows a compositional bias: pro residues; sequence GPAPPPPPPR. Low complexity predominate over residues 49–64; sequence NPVSSNSAVQSQAAAA. Residues 89-107 are compositionally biased toward polar residues; that stretch reads STNSMRATPHSSSSFNLRS. Residues 108-117 show a composition bias toward basic and acidic residues; sequence PTREPSEYRH. Low complexity-rich tracts occupy residues 118 to 156, 203 to 230, and 240 to 251; these read PLSS…SLSS, SLQA…PLSA, and SSSSQPPARASQ. The segment covering 264 to 276 has biased composition (basic and acidic residues); it reads SFRDRDSSVREKS. Positions 288–297 are enriched in polar residues; that stretch reads EASNGISGSS. Residues 298-317 show a composition bias toward basic and acidic residues; that stretch reads PRKDRDRDRDHRGTTRESQR. Composition is skewed to polar residues over residues 318-340 and 366-378; these read RSVS…SASN and VDNT…AAPS. Over residues 411–420 the composition is skewed to low complexity; it reads SPRLSLRPPS. Composition is skewed to polar residues over residues 433–442, 451–465, and 472–481; these read NPTNGTTSTA, SPPS…TNPS, and SFSNILSSSE. Composition is skewed to basic and acidic residues over residues 500–519 and 529–540; these read VPMK…EKKE and RISDIRHSESTP. Positions 666 to 735 form a coiled coil; it reads ERELFAEKER…VQQTRLILQK (70 aa). A compositionally biased stretch (low complexity) spans 689-707; that stretch reads MATTMEAKAAALARASAAQ. Positions 709-723 are enriched in basic and acidic residues; sequence EAERQKYMREAERAN. Basic residues predominate over residues 769–781; that stretch reads TKGKGRAGARPKK. The segment covering 782–793 has biased composition (basic and acidic residues); it reads SKEQKQAEKDAA. A compositionally biased stretch (low complexity) spans 794–806; sequence EAAQAALDAGLEL. The segment covering 824-858 has biased composition (basic and acidic residues); it reads APKEADVDKDKENKEPQEPKEPKEPKEKVIKEKVV. Positions 881-1006 constitute a DBINO domain; the sequence is IWRDLARKDV…SHFIGKKIKT (126 aa). In terms of domain architecture, Helicase ATP-binding spans 1130 to 1302; it reads VNLYEQGING…WALLHFIMPS (173 aa). 1143-1150 lines the ATP pocket; that stretch reads DEMGLGKT. The short motif at 1253 to 1256 is the DEAQ box element; the sequence is DEAQ. In terms of domain architecture, Helicase C-terminal spans 1702-1858; that stretch reads KLDELLRELK…GSSAAGGGVD (157 aa). Over residues 1891–1902 the composition is skewed to basic and acidic residues; sequence ELLESGELDKMQ. A disordered region spans residues 1891-1986; that stretch reads ELLESGELDK…GSKKAKTTKQ (96 aa). Positions 1903 to 1914 are enriched in basic residues; the sequence is KKSRGGNKRKRG. A compositionally biased stretch (basic and acidic residues) spans 1919–1933; the sequence is EGKEVSLDEMYHEGE. Gly residues predominate over residues 1954 to 1967; it reads AAGGEGGDGKGAVG. A compositionally biased stretch (basic residues) spans 1970–1985; the sequence is AKKRKTGGSKKAKTTK.

The protein belongs to the SNF2/RAD54 helicase family. In terms of assembly, component of the INO80 chromatin-remodeling complex.

Its subcellular location is the nucleus. It carries out the reaction ATP + H2O = ADP + phosphate + H(+). Its function is as follows. ATPase component of the INO80 complex which remodels chromatin by shifting nucleosomes and is involved in DNA repair. The sequence is that of Chromatin-remodeling ATPase INO80 (crf2-1) from Neurospora crassa (strain ATCC 24698 / 74-OR23-1A / CBS 708.71 / DSM 1257 / FGSC 987).